The primary structure comprises 97 residues: YcgL domain-containing protein PSPTO_3921 (97 aa).

Residues Arg3–Pro87 form the YcgL domain.

In Pseudomonas syringae pv. tomato (strain ATCC BAA-871 / DC3000), this protein is YcgL domain-containing protein PSPTO_3921.